Reading from the N-terminus, the 101-residue chain is NAD(P)H-quinone oxidoreductase subunit 4L, chloroplastic (101 aa).

Transmembrane regions (helical) follow at residues 2 to 22 (ILEH…YGLI), 32 to 52 (MCLE…SDFF), and 61 to 81 (IFSI…LAIV).

It belongs to the complex I subunit 4L family. In terms of assembly, NDH is composed of at least 16 different subunits, 5 of which are encoded in the nucleus.

It is found in the plastid. Its subcellular location is the chloroplast thylakoid membrane. The catalysed reaction is a plastoquinone + NADH + (n+1) H(+)(in) = a plastoquinol + NAD(+) + n H(+)(out). It catalyses the reaction a plastoquinone + NADPH + (n+1) H(+)(in) = a plastoquinol + NADP(+) + n H(+)(out). Its function is as follows. NDH shuttles electrons from NAD(P)H:plastoquinone, via FMN and iron-sulfur (Fe-S) centers, to quinones in the photosynthetic chain and possibly in a chloroplast respiratory chain. The immediate electron acceptor for the enzyme in this species is believed to be plastoquinone. Couples the redox reaction to proton translocation, and thus conserves the redox energy in a proton gradient. The polypeptide is NAD(P)H-quinone oxidoreductase subunit 4L, chloroplastic (Eucalyptus globulus subsp. globulus (Tasmanian blue gum)).